Reading from the N-terminus, the 36-residue chain is Pancreatic polypeptide (36 aa).

Phenylalanine amide is present on Phe36.

The protein belongs to the NPY family.

The protein resides in the secreted. Functionally, hormone secreted by pancreatic cells that acts as a regulator of pancreatic and gastrointestinal functions. The protein is Pancreatic polypeptide (ppy) of Rana temporaria (European common frog).